The sequence spans 295 residues: Dual specificity protein phosphatase 15 (295 aa).

Residues 1–141 (MTEGVLPGLY…LEEFGWASSQ (141 aa)) enclose the Tyrosine-protein phosphatase domain. Thr2 carries N-myristoyl glycine lipidation. Cys85 functions as the Phosphocysteine intermediate in the catalytic mechanism. The span at 251–270 (SSSCTLSASTERPDGSSTPG) shows a compositional bias: polar residues. Positions 251-272 (SSSCTLSASTERPDGSSTPGNP) are disordered.

Belongs to the protein-tyrosine phosphatase family. Non-receptor class dual specificity subfamily. As to expression, highly expressed in testis. Expressed in brain; up-regulated in patients with multiple sclerosis gray matter lesions.

The protein localises to the cytoplasm. It localises to the cell membrane. It catalyses the reaction O-phospho-L-tyrosyl-[protein] + H2O = L-tyrosyl-[protein] + phosphate. The enzyme catalyses O-phospho-L-seryl-[protein] + H2O = L-seryl-[protein] + phosphate. It carries out the reaction O-phospho-L-threonyl-[protein] + H2O = L-threonyl-[protein] + phosphate. In terms of biological role, may dephosphorylate MAPK13, ATF2, ERBB3, PDGFRB and SNX6. Its function is as follows. May play a role in the regulation of oligodendrocyte differentiation. May play a role in the regulation of myelin formation. Involved in the regulation of Erk1/2 phosphorylation in Schwann cells; the signaling may be linked to the regulation of myelination. This Homo sapiens (Human) protein is Dual specificity protein phosphatase 15.